The sequence spans 690 residues: Putative glycerophosphocholine phosphodiesterase GPCPD1 homolog 1 (690 aa).

The region spanning 1–122 (MDQDYKAHFK…RKNITDQFGS (122 aa)) is the CBM20 domain. The GP-PDE domain maps to 344 to 654 (MLQIGHRGMG…DRIGEDEVLK (311 aa)). Positions 670–690 (ARSQHNSRSPSMSRRCMSTVE) are disordered. Residues 676–690 (SRSPSMSRRCMSTVE) show a composition bias toward low complexity.

It belongs to the glycerophosphoryl diester phosphodiesterase family.

This Caenorhabditis elegans protein is Putative glycerophosphocholine phosphodiesterase GPCPD1 homolog 1.